The primary structure comprises 227 residues: Potassium/proton antiporter CemA (227 aa).

4 helical membrane passes run 5 to 25 (SISL…SFTF), 112 to 132 (IICF…LILI), 143 to 163 (LSDT…IGFH), and 187 to 207 (IISG…KYWI).

This sequence belongs to the CemA family.

The protein resides in the plastid. It is found in the chloroplast inner membrane. The enzyme catalyses K(+)(in) + H(+)(out) = K(+)(out) + H(+)(in). In terms of biological role, contributes to K(+)/H(+) antiport activity by supporting proton efflux to control proton extrusion and homeostasis in chloroplasts in a light-dependent manner to modulate photosynthesis. Prevents excessive induction of non-photochemical quenching (NPQ) under continuous-light conditions. Indirectly promotes efficient inorganic carbon uptake into chloroplasts. The polypeptide is Potassium/proton antiporter CemA (Phaseolus vulgaris (Kidney bean)).